A 171-amino-acid polypeptide reads, in one-letter code: Non-specific lipid transfer protein GPI-anchored 19 (171 aa).

The N-terminal stretch at 1-18 (MILAILALVIATFLYGGA) is a signal peptide. Cystine bridges form between Cys25–Cys66, Cys35–Cys50, Cys51–Cys93, and Cys64–Cys103. N-linked (GlcNAc...) asparagine glycosylation is found at Asn72 and Asn82. Positions 113 to 149 (LPANTPVGSPRSAPSPSGTTSPANTPSGSKKFPLSNE) are disordered. A compositionally biased stretch (low complexity) spans 118–141 (PVGSPRSAPSPSGTTSPANTPSGS). A lipid anchor (GPI-anchor amidated serine) is attached at Ser147. N-linked (GlcNAc...) asparagine glycosylation occurs at Asn148. Positions 148 to 171 (NESSSKSNVIILSFVSIALVLAII) are cleaved as a propeptide — removed in mature form.

The protein belongs to the plant LTP family.

The protein resides in the cell membrane. Functionally, probable lipid transfer protein. The chain is Non-specific lipid transfer protein GPI-anchored 19 from Arabidopsis thaliana (Mouse-ear cress).